The primary structure comprises 451 residues: UPF0210 protein NMB1652 (451 aa).

Belongs to the UPF0210 family. In terms of assembly, homodimer.

This chain is UPF0210 protein NMB1652, found in Neisseria meningitidis serogroup B (strain ATCC BAA-335 / MC58).